A 213-amino-acid chain; its full sequence is 3-demethoxyubiquinol 3-hydroxylase (213 aa).

Residues Glu62, Glu92, His95, Glu144, Glu176, and His179 each coordinate Fe cation.

This sequence belongs to the COQ7 family. The cofactor is Fe cation.

The protein localises to the cell membrane. It carries out the reaction a 5-methoxy-2-methyl-3-(all-trans-polyprenyl)benzene-1,4-diol + AH2 + O2 = a 3-demethylubiquinol + A + H2O. Its pathway is cofactor biosynthesis; ubiquinone biosynthesis. Functionally, catalyzes the hydroxylation of 2-nonaprenyl-3-methyl-6-methoxy-1,4-benzoquinol during ubiquinone biosynthesis. This is 3-demethoxyubiquinol 3-hydroxylase from Legionella pneumophila (strain Paris).